Reading from the N-terminus, the 395-residue chain is Probable nitrate/nitrite transporter NarK2 (395 aa).

12 helical membrane-spanning segments follow: residues 8 to 28 (LVLATWISVVNFWAWNLIGPL), 45 to 65 (LLVATPILVGALGRIVTGPLT), 72 to 92 (AMLIAVTLASILPVLAVGVAA), 98 to 118 (ALLVFFGLFLGVAGTIFAVGI), 131 to 151 (GFSTGVFGMGMVGTALSAFFT), 157 to 177 (WFGLFTTHAIVAAALASTAVV), 205 to 225 (LPVTWEMSFLYAIVFGGFVAF), 244 to 266 (AGARTAGFALAAVLARPVGGWLS), 274 to 294 (VVLASLAGTALLAFAAALQPP), 301 to 321 (ATFITLAVCLGVGTGGVFAWV), 333 to 353 (VTGIVAAAGGLGGYFPPLVMG), and 365 to 385 (VGLLLLVATALVACTYTALHA).

It belongs to the major facilitator superfamily. Nitrate/nitrite porter (TC 2.A.1.8) family.

It localises to the cell membrane. Its function is as follows. Involved in excretion of nitrite produced by the dissimilatory reduction of nitrate. The chain is Probable nitrate/nitrite transporter NarK2 (narK2) from Mycobacterium tuberculosis (strain CDC 1551 / Oshkosh).